The primary structure comprises 117 residues: Large ribosomal subunit protein uL18 (117 aa).

Belongs to the universal ribosomal protein uL18 family. As to quaternary structure, part of the 50S ribosomal subunit; part of the 5S rRNA/L5/L18/L25 subcomplex. Contacts the 5S and 23S rRNAs.

In terms of biological role, this is one of the proteins that bind and probably mediate the attachment of the 5S RNA into the large ribosomal subunit, where it forms part of the central protuberance. The chain is Large ribosomal subunit protein uL18 from Haemophilus influenzae (strain 86-028NP).